Consider the following 491-residue polypeptide: Glutamyl-tRNA(Gln) amidotransferase subunit A (491 aa).

Catalysis depends on charge relay system residues K79 and S158. Catalysis depends on S182, which acts as the Acyl-ester intermediate.

This sequence belongs to the amidase family. GatA subfamily. Heterotrimer of A, B and C subunits.

The catalysed reaction is L-glutamyl-tRNA(Gln) + L-glutamine + ATP + H2O = L-glutaminyl-tRNA(Gln) + L-glutamate + ADP + phosphate + H(+). Allows the formation of correctly charged Gln-tRNA(Gln) through the transamidation of misacylated Glu-tRNA(Gln) in organisms which lack glutaminyl-tRNA synthetase. The reaction takes place in the presence of glutamine and ATP through an activated gamma-phospho-Glu-tRNA(Gln). The sequence is that of Glutamyl-tRNA(Gln) amidotransferase subunit A from Anaplasma phagocytophilum (strain HZ).